A 251-amino-acid chain; its full sequence is MADQPQETTDFGFRTVARDEKQAMVADVFHSVAAKYDVMNDLMSFGIHRIWKRFTIDCSGVRRGQRVLDLAGGTGDLAAKFSRMVGEQGQVVLADINDSMLKMGREKLRDRGIIGNVNYVQANAEALPFPDNYFDCITISFGLRNVTDKDKALRSMFRVLKPGGRLLVLEFSKPLLAPLSKAYDAYSFHVLPKIGELVVKDPESYRYLAESIRMHPDQETLKGMMGAAGFDNVTYFNLTGGIVALHRGFKF.

S-adenosyl-L-methionine contacts are provided by residues T74, D95, 123 to 124 (NA), and S140.

Belongs to the class I-like SAM-binding methyltransferase superfamily. MenG/UbiE family.

The catalysed reaction is a 2-demethylmenaquinol + S-adenosyl-L-methionine = a menaquinol + S-adenosyl-L-homocysteine + H(+). It carries out the reaction a 2-methoxy-6-(all-trans-polyprenyl)benzene-1,4-diol + S-adenosyl-L-methionine = a 5-methoxy-2-methyl-3-(all-trans-polyprenyl)benzene-1,4-diol + S-adenosyl-L-homocysteine + H(+). The protein operates within quinol/quinone metabolism; menaquinone biosynthesis; menaquinol from 1,4-dihydroxy-2-naphthoate: step 2/2. Its pathway is cofactor biosynthesis; ubiquinone biosynthesis. Functionally, methyltransferase required for the conversion of demethylmenaquinol (DMKH2) to menaquinol (MKH2) and the conversion of 2-polyprenyl-6-methoxy-1,4-benzoquinol (DDMQH2) to 2-polyprenyl-3-methyl-6-methoxy-1,4-benzoquinol (DMQH2). This is Ubiquinone/menaquinone biosynthesis C-methyltransferase UbiE from Serratia proteamaculans (strain 568).